Reading from the N-terminus, the 115-residue chain is Large ribosomal subunit protein uL22 (115 aa).

This sequence belongs to the universal ribosomal protein uL22 family. Part of the 50S ribosomal subunit.

This protein binds specifically to 23S rRNA; its binding is stimulated by other ribosomal proteins, e.g. L4, L17, and L20. It is important during the early stages of 50S assembly. It makes multiple contacts with different domains of the 23S rRNA in the assembled 50S subunit and ribosome. Functionally, the globular domain of the protein is located near the polypeptide exit tunnel on the outside of the subunit, while an extended beta-hairpin is found that lines the wall of the exit tunnel in the center of the 70S ribosome. This Streptomyces avermitilis (strain ATCC 31267 / DSM 46492 / JCM 5070 / NBRC 14893 / NCIMB 12804 / NRRL 8165 / MA-4680) protein is Large ribosomal subunit protein uL22.